The primary structure comprises 324 residues: ATP-dependent 6-phosphofructokinase (324 aa).

Gly11 provides a ligand contact to ATP. An ADP-binding site is contributed by 21–25 (RAVVR). ATP contacts are provided by residues 72-73 (RE) and 102-105 (GNGS). Residue Asn103 participates in Mg(2+) binding. 126-128 (TID) serves as a coordination point for substrate. Catalysis depends on Asp128, which acts as the Proton acceptor. Residue Arg155 participates in ADP binding. Residues Arg163 and 170–172 (MGR) each bind substrate. ADP contacts are provided by residues 186–188 (GAD), Arg212, and 214–216 (KKF). Substrate-binding positions include Glu223, Arg248, and 254–257 (YIQR).

It belongs to the phosphofructokinase type A (PFKA) family. ATP-dependent PFK group I subfamily. Prokaryotic clade 'B1' sub-subfamily. In terms of assembly, homotetramer. Mg(2+) is required as a cofactor.

Its subcellular location is the cytoplasm. The catalysed reaction is beta-D-fructose 6-phosphate + ATP = beta-D-fructose 1,6-bisphosphate + ADP + H(+). The protein operates within carbohydrate degradation; glycolysis; D-glyceraldehyde 3-phosphate and glycerone phosphate from D-glucose: step 3/4. Allosterically activated by ADP and other diphosphonucleosides, and allosterically inhibited by phosphoenolpyruvate. In terms of biological role, catalyzes the phosphorylation of D-fructose 6-phosphate to fructose 1,6-bisphosphate by ATP, the first committing step of glycolysis. This chain is ATP-dependent 6-phosphofructokinase, found in Persephonella marina (strain DSM 14350 / EX-H1).